Here is a 198-residue protein sequence, read N- to C-terminus: Nucleoid occlusion factor SlmA (198 aa).

In terms of domain architecture, HTH tetR-type spans 11-71 (PNRKHQILES…GLIDFIEESI (61 aa)). The segment at residues 34 to 53 (TTAKLAAEVGFSEAALYRHF) is a DNA-binding region (H-T-H motif).

Belongs to the nucleoid occlusion factor SlmA family. In terms of assembly, homodimer. Interacts with FtsZ.

The protein localises to the cytoplasm. It localises to the nucleoid. Functionally, required for nucleoid occlusion (NO) phenomenon, which prevents Z-ring formation and cell division over the nucleoid. Acts as a DNA-associated cell division inhibitor that binds simultaneously chromosomal DNA and FtsZ, and disrupts the assembly of FtsZ polymers. SlmA-DNA-binding sequences (SBS) are dispersed on non-Ter regions of the chromosome, preventing FtsZ polymerization at these regions. The chain is Nucleoid occlusion factor SlmA from Colwellia psychrerythraea (strain 34H / ATCC BAA-681) (Vibrio psychroerythus).